The chain runs to 235 residues: 2-C-methyl-D-erythritol 4-phosphate cytidylyltransferase (235 aa).

Belongs to the IspD/TarI cytidylyltransferase family. IspD subfamily.

The catalysed reaction is 2-C-methyl-D-erythritol 4-phosphate + CTP + H(+) = 4-CDP-2-C-methyl-D-erythritol + diphosphate. It participates in isoprenoid biosynthesis; isopentenyl diphosphate biosynthesis via DXP pathway; isopentenyl diphosphate from 1-deoxy-D-xylulose 5-phosphate: step 2/6. Catalyzes the formation of 4-diphosphocytidyl-2-C-methyl-D-erythritol from CTP and 2-C-methyl-D-erythritol 4-phosphate (MEP). In Mycolicibacterium paratuberculosis (strain ATCC BAA-968 / K-10) (Mycobacterium paratuberculosis), this protein is 2-C-methyl-D-erythritol 4-phosphate cytidylyltransferase.